A 265-amino-acid polypeptide reads, in one-letter code: Small ribosomal subunit protein uS3 (265 aa).

Residues 39–111 (IREFLNENFS…EVILNIIEVR (73 aa)) enclose the KH type-2 domain. A disordered region spans residues 224 to 250 (FEAGNQRRGQKRRPRNDQPVKDLNKEK). Positions 238–250 (RNDQPVKDLNKEK) are enriched in basic and acidic residues.

This sequence belongs to the universal ribosomal protein uS3 family. As to quaternary structure, part of the 30S ribosomal subunit. Forms a tight complex with proteins S10 and S14.

Functionally, binds the lower part of the 30S subunit head. Binds mRNA in the 70S ribosome, positioning it for translation. The polypeptide is Small ribosomal subunit protein uS3 (Acholeplasma laidlawii).